Consider the following 167-residue polypeptide: Phosphopantetheine adenylyltransferase (167 aa).

Thr-9 provides a ligand contact to substrate. Residues 9–10 (TF) and His-17 contribute to the ATP site. Residues Lys-41, Leu-73, and Arg-87 each contribute to the substrate site. ATP is bound by residues 88–90 (GLR), Glu-98, and 123–129 (YQFISGT).

Belongs to the bacterial CoaD family. In terms of assembly, homohexamer. Mg(2+) serves as cofactor.

The protein localises to the cytoplasm. It catalyses the reaction (R)-4'-phosphopantetheine + ATP + H(+) = 3'-dephospho-CoA + diphosphate. It participates in cofactor biosynthesis; coenzyme A biosynthesis; CoA from (R)-pantothenate: step 4/5. Its function is as follows. Reversibly transfers an adenylyl group from ATP to 4'-phosphopantetheine, yielding dephospho-CoA (dPCoA) and pyrophosphate. The protein is Phosphopantetheine adenylyltransferase of Ralstonia pickettii (strain 12J).